The chain runs to 427 residues: Serine--tRNA ligase (427 aa).

230–232 (TAE) is a binding site for L-serine. An ATP-binding site is contributed by 261 to 263 (RAE). Glutamate 284 contacts L-serine. 348–351 (EISS) provides a ligand contact to ATP. Residue serine 384 participates in L-serine binding.

The protein belongs to the class-II aminoacyl-tRNA synthetase family. Type-1 seryl-tRNA synthetase subfamily. In terms of assembly, homodimer. The tRNA molecule binds across the dimer.

It localises to the cytoplasm. It carries out the reaction tRNA(Ser) + L-serine + ATP = L-seryl-tRNA(Ser) + AMP + diphosphate + H(+). The catalysed reaction is tRNA(Sec) + L-serine + ATP = L-seryl-tRNA(Sec) + AMP + diphosphate + H(+). The protein operates within aminoacyl-tRNA biosynthesis; selenocysteinyl-tRNA(Sec) biosynthesis; L-seryl-tRNA(Sec) from L-serine and tRNA(Sec): step 1/1. Its function is as follows. Catalyzes the attachment of serine to tRNA(Ser). Is also able to aminoacylate tRNA(Sec) with serine, to form the misacylated tRNA L-seryl-tRNA(Sec), which will be further converted into selenocysteinyl-tRNA(Sec). The protein is Serine--tRNA ligase of Moorella thermoacetica (strain ATCC 39073 / JCM 9320).